The primary structure comprises 644 residues: Interleukin-23 receptor (644 aa).

An N-terminal signal peptide occupies residues 1 to 23 (MSHLTLQLHVVIALYVLFRWCHG). Residues 24–374 (GITSINCSGD…PASGNHQDIG (351 aa)) are Extracellular-facing. N-linked (GlcNAc...) asparagine glycosylation is found at Asn47, Asn130, and Asn232. Fibronectin type-III domains follow at residues 127–217 (APSN…LDDI) and 219–318 (IPSA…TSQE). Residues 375-395 (LLSGMVFLAIMLPIFSLIGIF) traverse the membrane as a helical segment. The Cytoplasmic segment spans residues 396–644 (NRSLRIGIKR…HFSRISLFQK (249 aa)).

This sequence belongs to the type I cytokine receptor family. Type 2 subfamily. As to quaternary structure, heterodimer with IL12RB1. In presence of IL23, the heterodimer forms the IL23 receptor. Interacts with JAK2 and in presence of IL23 with STAT3. In terms of processing, phosphorylated in response to IL23. Expressed by Th1, Th2 and dendritic cells.

The protein localises to the cell membrane. In terms of biological role, associates with IL12RB1 to form the interleukin-23 receptor. Binds IL23 and mediates T-cells, NK cells and possibly certain macrophage/myeloid cells stimulation probably through activation of the Jak-Stat signaling cascade. IL23 functions in innate and adaptive immunity and may participate in acute response to infection in peripheral tissues. IL23 may be responsible for autoimmune inflammatory diseases and be important for tumorigenesis. This Mus musculus (Mouse) protein is Interleukin-23 receptor (Il23r).